The following is a 36-amino-acid chain: Protein YibY (36 aa).

The sequence is that of Protein YibY from Escherichia coli (strain K12).